We begin with the raw amino-acid sequence, 354 residues long: Methionine import ATP-binding protein MetN (354 aa).

The region spanning 8–250 (LDHIDITFRQ…PKEALTQKFI (243 aa)) is the ABC transporter domain. Residue 42–49 (GYSGAGKS) participates in ATP binding.

The protein belongs to the ABC transporter superfamily. Methionine importer (TC 3.A.1.24) family. The complex is composed of two ATP-binding proteins (MetN), two transmembrane proteins (MetI) and a solute-binding protein (MetQ).

Its subcellular location is the cell membrane. The catalysed reaction is L-methionine(out) + ATP + H2O = L-methionine(in) + ADP + phosphate + H(+). It carries out the reaction D-methionine(out) + ATP + H2O = D-methionine(in) + ADP + phosphate + H(+). Its function is as follows. Part of the ABC transporter complex MetNIQ involved in methionine import. Responsible for energy coupling to the transport system. This Streptococcus pyogenes serotype M6 (strain ATCC BAA-946 / MGAS10394) protein is Methionine import ATP-binding protein MetN.